A 53-amino-acid polypeptide reads, in one-letter code: Cytochrome c-552 (53 aa).

Heme c is bound by residues cysteine 19, cysteine 22, histidine 23, and methionine 44.

In terms of processing, binds 1 heme c group covalently per subunit.

The protein resides in the cell membrane. The polypeptide is Cytochrome c-552 (Schinkia azotoformans (Bacillus azotoformans)).